We begin with the raw amino-acid sequence, 309 residues long: Olfactory receptor 14A16 (309 aa).

Residues 1-23 (MANLTIVTEFILMGFSTNKNMCI) are Extracellular-facing. N-linked (GlcNAc...) asparagine glycosylation is present at Asn-3. The chain crosses the membrane as a helical span at residues 24–44 (LHSILFLLIYLCALMGNVLII). The Cytoplasmic portion of the chain corresponds to 45–52 (MITTLDHH). A helical membrane pass occupies residues 53-73 (LHTPVYFFLKNLSFLDLCLIS). Topologically, residues 74–97 (VTAPKSIANSLIHNNSISFLGCVS) are extracellular. A glycan (N-linked (GlcNAc...) asparagine) is linked at Asn-87. Cys-95 and Cys-187 are oxidised to a cystine. Residues 98–118 (QVFLLLSSASAELLLLTVMSF) traverse the membrane as a helical segment. The Cytoplasmic segment spans residues 119–131 (DRYTAICHPLHYD). The chain crosses the membrane as a helical span at residues 132–152 (VIMDRSTCVQRATVSWLYGGL). Residues 153-194 (IAVMHTAGTFSLSYCGSNMVHQFFCDIPQLLAISCSENLIRE) lie on the Extracellular side of the membrane. Residues 195-215 (IALILINVVLDFCCFIVIIIT) traverse the membrane as a helical segment. Residues 216-235 (YVHVFSTVKKIPSTEGQSKA) are Cytoplasmic-facing. The helical transmembrane segment at 236–255 (YSICLPHLLVVLFLSTGFIA) threads the bilayer. Residues 256-268 (YLKPASESPSILD) lie on the Extracellular side of the membrane. Residues 269-289 (AVISVFYTMLPPTFNPIIYSL) traverse the membrane as a helical segment. Topologically, residues 290–309 (RNKAIKVALGMLIKGKLTKK) are cytoplasmic.

The protein belongs to the G-protein coupled receptor 1 family.

Its subcellular location is the cell membrane. Odorant receptor. This is Olfactory receptor 14A16 (OR14A16) from Homo sapiens (Human).